Here is a 119-residue protein sequence, read N- to C-terminus: Large ribosomal subunit protein uL22 (119 aa).

The protein belongs to the universal ribosomal protein uL22 family. In terms of assembly, part of the 50S ribosomal subunit.

This protein binds specifically to 23S rRNA; its binding is stimulated by other ribosomal proteins, e.g. L4, L17, and L20. It is important during the early stages of 50S assembly. It makes multiple contacts with different domains of the 23S rRNA in the assembled 50S subunit and ribosome. Functionally, the globular domain of the protein is located near the polypeptide exit tunnel on the outside of the subunit, while an extended beta-hairpin is found that lines the wall of the exit tunnel in the center of the 70S ribosome. This chain is Large ribosomal subunit protein uL22, found in Trichodesmium erythraeum (strain IMS101).